A 465-amino-acid polypeptide reads, in one-letter code: Mitochondrial-processing peptidase subunit beta (465 aa).

Residue His-79 coordinates Zn(2+). Residue Glu-82 is the Proton acceptor of the active site. Residues His-83 and Glu-159 each coordinate Zn(2+).

Belongs to the peptidase M16 family. As to quaternary structure, heterodimer of an alpha subunit and a beta subunit subunits, forming the mitochondrial processing protease (MPP) in which the alpha subunit is involved in substrate recognition and binding and the beta subunit is the catalytic subunit. Zn(2+) is required as a cofactor.

Its subcellular location is the mitochondrion matrix. It catalyses the reaction Release of N-terminal transit peptides from precursor proteins imported into the mitochondrion, typically with Arg in position P2.. Binding to the alpha subunit is required for catalytic activity. Functionally, catalytic subunit of the essential mitochondrial processing protease (MPP), which cleaves the mitochondrial sequence off newly imported precursors proteins. Preferentially, cleaves after an arginine at position P2. The protein is Mitochondrial-processing peptidase subunit beta (MPP1) of Blastocladiella emersonii (Aquatic fungus).